A 297-amino-acid chain; its full sequence is Glucuronoxylan 4-O-methyltransferase 3 (297 aa).

A helical transmembrane segment spans residues 9–29 (LNLKVIFIGSSILILIIIYLA). Positions 35–47 (SSSSKPISKTNLS) are enriched in low complexity. The tract at residues 35-63 (SSSSKPISKTNLSQEEEETQHKQEGCPTT) is disordered.

Belongs to the methyltransferase superfamily. As to expression, expressed in hypocotyls, roots, rosette leaves, stems and siliques.

The protein localises to the golgi apparatus membrane. It carries out the reaction glucuronoxylan D-glucuronate + n S-adenosyl-L-methionine = glucuronoxylan 4-O-methyl-D-glucuronate + n S-adenosyl-L-homocysteine + n H(+). Its function is as follows. Methyltransferase catalyzing 4-O-methylation of glucuronic acid side chains on xylan. The protein is Glucuronoxylan 4-O-methyltransferase 3 (GXM3) of Arabidopsis thaliana (Mouse-ear cress).